The primary structure comprises 244 residues: Leucyl/phenylalanyl-tRNA--protein transferase (244 aa).

Belongs to the L/F-transferase family.

It is found in the cytoplasm. It catalyses the reaction N-terminal L-lysyl-[protein] + L-leucyl-tRNA(Leu) = N-terminal L-leucyl-L-lysyl-[protein] + tRNA(Leu) + H(+). It carries out the reaction N-terminal L-arginyl-[protein] + L-leucyl-tRNA(Leu) = N-terminal L-leucyl-L-arginyl-[protein] + tRNA(Leu) + H(+). The catalysed reaction is L-phenylalanyl-tRNA(Phe) + an N-terminal L-alpha-aminoacyl-[protein] = an N-terminal L-phenylalanyl-L-alpha-aminoacyl-[protein] + tRNA(Phe). Functions in the N-end rule pathway of protein degradation where it conjugates Leu, Phe and, less efficiently, Met from aminoacyl-tRNAs to the N-termini of proteins containing an N-terminal arginine or lysine. In Thermodesulfovibrio yellowstonii (strain ATCC 51303 / DSM 11347 / YP87), this protein is Leucyl/phenylalanyl-tRNA--protein transferase.